We begin with the raw amino-acid sequence, 335 residues long: 4-hydroxythreonine-4-phosphate dehydrogenase (335 aa).

The substrate site is built by H135 and T136. A divalent metal cation-binding residues include H165, H210, and H265. Substrate contacts are provided by K273, N282, and R291.

It belongs to the PdxA family. Homodimer. Requires Zn(2+) as cofactor. Mg(2+) is required as a cofactor. The cofactor is Co(2+).

Its subcellular location is the cytoplasm. It catalyses the reaction 4-(phosphooxy)-L-threonine + NAD(+) = 3-amino-2-oxopropyl phosphate + CO2 + NADH. The protein operates within cofactor biosynthesis; pyridoxine 5'-phosphate biosynthesis; pyridoxine 5'-phosphate from D-erythrose 4-phosphate: step 4/5. Catalyzes the NAD(P)-dependent oxidation of 4-(phosphooxy)-L-threonine (HTP) into 2-amino-3-oxo-4-(phosphooxy)butyric acid which spontaneously decarboxylates to form 3-amino-2-oxopropyl phosphate (AHAP). This chain is 4-hydroxythreonine-4-phosphate dehydrogenase, found in Saccharophagus degradans (strain 2-40 / ATCC 43961 / DSM 17024).